The chain runs to 229 residues: Potassium/proton antiporter CemA (229 aa).

The next 3 membrane-spanning stretches (helical) occupy residues Ala6–Cys26, Ile107–Gly127, and Ile189–Ile209.

The protein belongs to the CemA family.

The protein resides in the plastid. It is found in the chloroplast inner membrane. The catalysed reaction is K(+)(in) + H(+)(out) = K(+)(out) + H(+)(in). Contributes to K(+)/H(+) antiport activity by supporting proton efflux to control proton extrusion and homeostasis in chloroplasts in a light-dependent manner to modulate photosynthesis. Prevents excessive induction of non-photochemical quenching (NPQ) under continuous-light conditions. Indirectly promotes efficient inorganic carbon uptake into chloroplasts. The polypeptide is Potassium/proton antiporter CemA (Olimarabidopsis pumila (Dwarf rocket)).